A 393-amino-acid polypeptide reads, in one-letter code: tRNA(Met) cytidine acetate ligase (393 aa).

ATP is bound by residues Gly81, Asn142, and Arg167.

It belongs to the TmcAL family.

It is found in the cytoplasm. It carries out the reaction cytidine(34) in elongator tRNA(Met) + acetate + ATP = N(4)-acetylcytidine(34) in elongator tRNA(Met) + AMP + diphosphate. Catalyzes the formation of N(4)-acetylcytidine (ac(4)C) at the wobble position of elongator tRNA(Met), using acetate and ATP as substrates. First activates an acetate ion to form acetyladenylate (Ac-AMP) and then transfers the acetyl group to tRNA to form ac(4)C34. The sequence is that of tRNA(Met) cytidine acetate ligase from Bacillus cereus (strain 03BB102).